Reading from the N-terminus, the 1353-residue chain is ABC-type transporter MYCGRDRAFT_41235 (1353 aa).

A helical transmembrane segment spans residues 40–60; the sequence is ASASLWNWFFFSWLNPLIAIG. The N-linked (GlcNAc...) asparagine glycan is linked to Asn-121. Transmembrane regions (helical) follow at residues 124-144, 172-192, 250-270, 271-291, 364-384, and 397-417; these read VLVW…ATIT, IGQG…GVMA, FACG…ICLG, LTIA…AILV, VALS…TYAA, and ALTL…AFGA. The ABC transmembrane type-1 1 domain maps to 129-420; that stretch reads WVGGAMKLFA…LPVAFGAAAD (292 aa). Residues 460 to 684 enclose the ABC transporter 1 domain; sequence YRVQDHSDEK…EGGQMRRVVE (225 aa). Asn-481 carries N-linked (GlcNAc...) asparagine glycosylation. Residue 496–503 participates in ATP binding; sequence GPVGAGKS. Positions 687–720 are disordered; the sequence is ASKSSAEEEEVEDGDLKDGVPSTDGGDASQTTSN. The next 6 membrane-spanning stretches (helical) occupy residues 748–768, 796–816, 864–882, 888–907, 973–993, and 1002–1022; these read PAFT…GSIL, LGVS…FFIF, AFRM…VVLI, WFLL…GMYY, LSVR…LIVV, and AQGG…GFMI. The ABC transmembrane type-1 2 domain maps to 756–1030; it reads ILSMLIFQGG…MIRQSAEIEN (275 aa). The ABC transporter 2 domain maps to 1070-1334; sequence IEMRDVVFTH…EGGHFRSLCS (265 aa). 1104-1111 contributes to the ATP binding site; the sequence is GRTGSGKS. The span at 1191-1200 shows a compositional bias: polar residues; that stretch reads QSSAETLTSS. The segment at 1191–1223 is disordered; the sequence is QSSAETLTSSDQEKSSPDDAAISPSSHSHSQHL. The segment covering 1208–1218 has biased composition (low complexity); the sequence is DDAAISPSSHS.

This sequence belongs to the ABC transporter superfamily. ABCC family. Conjugate transporter (TC 3.A.1.208) subfamily.

It is found in the cell membrane. Multidrug resistance protein; part of the gene cluster 14 that mediates the biosynthesis of a ferrichrome A-like siderophors which may contribute to organismal virulence. The chain is ABC-type transporter MYCGRDRAFT_41235 from Zymoseptoria tritici (strain CBS 115943 / IPO323) (Speckled leaf blotch fungus).